Here is a 131-residue protein sequence, read N- to C-terminus: MVTLFTSPSCTSCRKAKAWLQEHDIPYTERNIFSEHLTIDEIKQILKMTEDGTDEIISTRSKTYQKLNVDIDSLPLQDLYSIIQDNPGLLRRPIILDNKRLQVGYNEDEIRRFLPRKVRTFQLQEAQRMVD.

An intrachain disulfide couples Cys-10 to Cys-13.

Belongs to the ArsC family. Spx subfamily. As to quaternary structure, interacts with the C-terminal domain of the alpha subunit of the RNAP.

The protein resides in the cytoplasm. Under non-stress conditions, Spx is degraded by ClpXP. Efficient degradation by ClpXP requires the adapter protein SpxH/YjbH. Function, levels and solubility of Spx are affected by SpxH/YjbH aggregation and stress conditions. In terms of biological role, global transcriptional regulator that plays a key role in stress response and exerts either positive or negative regulation of genes. Acts by interacting with the C-terminal domain of the alpha subunit of the RNA polymerase (RNAP). This interaction can enhance binding of RNAP to the promoter region of target genes and stimulate their transcription, or block interaction of RNAP with activator proteins and repress transcription. Functionally, required for transcription of thioredoxin reductase (trxB). Modulates the expression of icaR, encoding a repressor of the biofilm operon icaADBC. Also controls the transcription of trfA, a gene implicated in cell wall antibiotic resistance, which in turn is required for degradation of MazE antitoxin, the unstable component of the MazEF toxin-antitoxin system, that neutralizes the endoribonuclease activity of MazF toxin. The protein is Global transcriptional regulator Spx of Staphylococcus aureus (strain NCTC 8325 / PS 47).